The chain runs to 140 residues: Large ribosomal subunit protein uL16 (140 aa).

Belongs to the universal ribosomal protein uL16 family. In terms of assembly, part of the 50S ribosomal subunit.

Binds 23S rRNA and is also seen to make contacts with the A and possibly P site tRNAs. The sequence is that of Large ribosomal subunit protein uL16 from Citrifermentans bemidjiense (strain ATCC BAA-1014 / DSM 16622 / JCM 12645 / Bem) (Geobacter bemidjiensis).